A 389-amino-acid polypeptide reads, in one-letter code: Phospho-N-acetylmuramoyl-pentapeptide-transferase (389 aa).

10 consecutive transmembrane segments (helical) span residues 25–45 (RAVM…PWVI), 74–94 (MGGV…CDWG), 97–117 (FIWV…VDDY), 134–154 (FFWQ…SVSE), 190–210 (ISYP…IVGS), 222–242 (GLVI…AYVM), 259–279 (AGEL…FLWF), 286–306 (VFMG…VAVI), 311–331 (IVLF…MAQV), and 366–386 (QVTV…LSTL).

The protein belongs to the glycosyltransferase 4 family. MraY subfamily. Mg(2+) serves as cofactor.

It is found in the cell inner membrane. It carries out the reaction UDP-N-acetyl-alpha-D-muramoyl-L-alanyl-gamma-D-glutamyl-meso-2,6-diaminopimeloyl-D-alanyl-D-alanine + di-trans,octa-cis-undecaprenyl phosphate = di-trans,octa-cis-undecaprenyl diphospho-N-acetyl-alpha-D-muramoyl-L-alanyl-D-glutamyl-meso-2,6-diaminopimeloyl-D-alanyl-D-alanine + UMP. The protein operates within cell wall biogenesis; peptidoglycan biosynthesis. In terms of biological role, catalyzes the initial step of the lipid cycle reactions in the biosynthesis of the cell wall peptidoglycan: transfers peptidoglycan precursor phospho-MurNAc-pentapeptide from UDP-MurNAc-pentapeptide onto the lipid carrier undecaprenyl phosphate, yielding undecaprenyl-pyrophosphoryl-MurNAc-pentapeptide, known as lipid I. The protein is Phospho-N-acetylmuramoyl-pentapeptide-transferase of Cupriavidus necator (strain ATCC 17699 / DSM 428 / KCTC 22496 / NCIMB 10442 / H16 / Stanier 337) (Ralstonia eutropha).